A 940-amino-acid chain; its full sequence is Gamma-aminobutyric acid type B receptor subunit 2 (940 aa).

Positions 1 to 40 (MASPPSSGQPRPPPPPPPPARLLLPLLLSLLLWLAPGAWG) are cleaved as a signal peptide. Residues 41 to 482 (WTRGAPRPPP…LRKISLPLYS (442 aa)) lie on the Extracellular side of the membrane. Asparagine 89 is a glycosylation site (N-linked (GlcNAc...) asparagine). Disulfide bonds link cysteine 107–cysteine 134, cysteine 236–cysteine 265, and cysteine 264–cysteine 301. 4 N-linked (GlcNAc...) asparagine glycosylation sites follow: asparagine 297, asparagine 388, asparagine 403, and asparagine 452. Residues 483–503 (ILSALTILGMIMASAFLFFNI) form a helical membrane-spanning segment. The Cytoplasmic segment spans residues 504-521 (KNRNQKLIKMSSPYMNNL). A helical membrane pass occupies residues 522 to 542 (IILGGMLSYASIFLFGLDGSF). Topologically, residues 543 to 550 (VSEKTFET) are extracellular. The chain crosses the membrane as a helical span at residues 551–571 (LCTVRTWILTVGYTTAFGAMF). The Cytoplasmic segment spans residues 572 to 596 (AKTWRVHAIFKNVKMKKKIIKDQKL). The chain crosses the membrane as a helical span at residues 597 to 617 (LVIVGGMLLIDLCILICWQAV). Residues 618-653 (DPLRRTVERYSMEPDPAGRDISIRPLLEHCENTHMT) lie on the Extracellular side of the membrane. The chain crosses the membrane as a helical span at residues 654–674 (IWLGIVYAYKGLLMLFGCFLA). Residues 675–690 (WETRNVSIPALNDSKY) lie on the Cytoplasmic side of the membrane. Residues 691–711 (IGMSVYNVGIMCIIGAAVSFL) traverse the membrane as a helical segment. Residues 712 to 719 (TRDQPNVQ) are Extracellular-facing. Residues 720 to 740 (FCIVALVIIFCSTITLCLVFV) traverse the membrane as a helical segment. At 741-940 (PKLITLRTNP…PSFRVMVSGL (200 aa)) the chain is on the cytoplasmic side. Residues 762–789 (TQNQKKEDSKTSTSVTSVNQASTSRLEG) are disordered. Polar residues predominate over residues 772–786 (TSTSVTSVNQASTSR). Phosphoserine is present on residues serine 775 and serine 778. Positions 780–818 (NQASTSRLEGLQSENHRLRMKITELDKDLEEVTMQLQDT) form a coiled coil. Position 818 is a phosphothreonine (threonine 818). Phosphoserine occurs at positions 883, 892, 912, 915, 919, and 923.

It belongs to the G-protein coupled receptor 3 family. GABA-B receptor subfamily. In terms of assembly, heterodimer of GABBR1 and GABBR2. Homodimers may form, but are inactive. Interacts (via C-terminus) with ATF4 (via leucine zipper domain). Interacts with KCTD8, KCTD12 and KCTD16; this interaction determines the pharmacology and kinetics of the receptor response, the KCTD proteins markedly accelerating the GABA-B response, although to different extents. In terms of tissue distribution, highly expressed in areas of the brain including thalamic nuclei, the hippocampus, cerebellar Purkinje cells and the medial habenula, and moderately expressed in the cerebral cortex, certain anterioventral thalamic nuclei, dorsal medial hypothalamic nucleus and suprachiasmatic nuclei. Also weakly expressed in the testis.

It is found in the cell membrane. The protein resides in the postsynaptic cell membrane. It localises to the perikaryon. Its subcellular location is the cell projection. The protein localises to the dendrite. Functionally, component of a heterodimeric G-protein coupled receptor for GABA, formed by GABBR1 and GABBR2. Within the heterodimeric GABA receptor, only GABBR1 seems to bind agonists, while GABBR2 mediates coupling to G proteins. Ligand binding causes a conformation change that triggers signaling via guanine nucleotide-binding proteins (G proteins) and modulates the activity of down-stream effectors, such as adenylate cyclase. Signaling inhibits adenylate cyclase, stimulates phospholipase A2, activates potassium channels, inactivates voltage-dependent calcium-channels and modulates inositol phospholipid hydrolysis. Plays a critical role in the fine-tuning of inhibitory synaptic transmission. Pre-synaptic GABA receptor inhibits neurotransmitter release by down-regulating high-voltage activated calcium channels, whereas postsynaptic GABA receptor decreases neuronal excitability by activating a prominent inwardly rectifying potassium (Kir) conductance that underlies the late inhibitory postsynaptic potentials. Not only implicated in synaptic inhibition but also in hippocampal long-term potentiation, slow wave sleep, muscle relaxation and antinociception. The chain is Gamma-aminobutyric acid type B receptor subunit 2 (Gabbr2) from Rattus norvegicus (Rat).